We begin with the raw amino-acid sequence, 319 residues long: ATP-dependent 6-phosphofructokinase (319 aa).

Gly11 is a binding site for ATP. 21 to 25 contributes to the ADP binding site; it reads RAVVR. Residues 72 to 73 and 102 to 105 contribute to the ATP site; these read RC and GDGS. Position 103 (Asp103) interacts with Mg(2+). Residue 125 to 127 participates in substrate binding; the sequence is TID. The Proton acceptor role is filled by Asp127. Residue Arg154 participates in ADP binding. Substrate-binding positions include Arg162 and 169-171; that span reads MGR. Residues 185-187, Arg211, and 213-215 contribute to the ADP site; these read GAE and KKH. Residues Glu222, Arg243, and 249 to 252 each bind substrate; that span reads HMQR.

Belongs to the phosphofructokinase type A (PFKA) family. ATP-dependent PFK group I subfamily. Prokaryotic clade 'B1' sub-subfamily. Homotetramer. It depends on Mg(2+) as a cofactor.

It is found in the cytoplasm. The enzyme catalyses beta-D-fructose 6-phosphate + ATP = beta-D-fructose 1,6-bisphosphate + ADP + H(+). It participates in carbohydrate degradation; glycolysis; D-glyceraldehyde 3-phosphate and glycerone phosphate from D-glucose: step 3/4. Its activity is regulated as follows. Allosterically activated by ADP and other diphosphonucleosides, and allosterically inhibited by phosphoenolpyruvate. Catalyzes the phosphorylation of D-fructose 6-phosphate to fructose 1,6-bisphosphate by ATP, the first committing step of glycolysis. The protein is ATP-dependent 6-phosphofructokinase of Macrococcus caseolyticus (strain JCSC5402) (Macrococcoides caseolyticum).